The primary structure comprises 431 residues: Adenylosuccinate synthetase (431 aa).

GTP-binding positions include 12–18 (GDEGKGK) and 40–42 (GHT). Residue D13 is the Proton acceptor of the active site. Residues D13 and G40 each coordinate Mg(2+). IMP is bound by residues 13 to 16 (DEGK), 38 to 41 (NAGH), T130, R144, Q224, T239, and R303. H41 (proton donor) is an active-site residue. Substrate is bound at residue 299–305 (STTGRPR). Residues R305, 331–333 (KAD), and 413–415 (SIG) each bind GTP.

It belongs to the adenylosuccinate synthetase family. Homodimer. Requires Mg(2+) as cofactor.

It is found in the cytoplasm. The enzyme catalyses IMP + L-aspartate + GTP = N(6)-(1,2-dicarboxyethyl)-AMP + GDP + phosphate + 2 H(+). It functions in the pathway purine metabolism; AMP biosynthesis via de novo pathway; AMP from IMP: step 1/2. In terms of biological role, plays an important role in the de novo pathway of purine nucleotide biosynthesis. Catalyzes the first committed step in the biosynthesis of AMP from IMP. In Cytophaga hutchinsonii (strain ATCC 33406 / DSM 1761 / CIP 103989 / NBRC 15051 / NCIMB 9469 / D465), this protein is Adenylosuccinate synthetase.